Here is a 299-residue protein sequence, read N- to C-terminus: ATP phosphoribosyltransferase (299 aa).

Belongs to the ATP phosphoribosyltransferase family. Long subfamily. Requires Mg(2+) as cofactor.

It localises to the cytoplasm. It carries out the reaction 1-(5-phospho-beta-D-ribosyl)-ATP + diphosphate = 5-phospho-alpha-D-ribose 1-diphosphate + ATP. Its pathway is amino-acid biosynthesis; L-histidine biosynthesis; L-histidine from 5-phospho-alpha-D-ribose 1-diphosphate: step 1/9. Its activity is regulated as follows. Feedback inhibited by histidine. Catalyzes the condensation of ATP and 5-phosphoribose 1-diphosphate to form N'-(5'-phosphoribosyl)-ATP (PR-ATP). Has a crucial role in the pathway because the rate of histidine biosynthesis seems to be controlled primarily by regulation of HisG enzymatic activity. This is ATP phosphoribosyltransferase from Shewanella halifaxensis (strain HAW-EB4).